Consider the following 143-residue polypeptide: Large ribosomal subunit protein uL16 (143 aa).

Belongs to the universal ribosomal protein uL16 family. In terms of assembly, part of the 50S ribosomal subunit.

Its function is as follows. Binds 23S rRNA and is also seen to make contacts with the A and possibly P site tRNAs. This is Large ribosomal subunit protein uL16 from Fusobacterium nucleatum subsp. nucleatum (strain ATCC 25586 / DSM 15643 / BCRC 10681 / CIP 101130 / JCM 8532 / KCTC 2640 / LMG 13131 / VPI 4355).